We begin with the raw amino-acid sequence, 269 residues long: HTH-type transcriptional activator ArnR (269 aa).

The Cytoplasmic portion of the chain corresponds to 1-218 (MTKSLFDVLK…LLRLTNSYTL (218 aa)). The H-T-H motif DNA-binding region spans 39 to 62 (TTEISQTINTSRKSIIDAIRKLVD). The chain crosses the membrane as a helical span at residues 219–239 (EMANVKVMGFILISLPLLMYF). Topologically, residues 240 to 242 (RDQ) are extracellular. Residues 243-263 (LGLIELPWLYAVIFLALLSVF) form a helical membrane-spanning segment. At 264 to 269 (AQILSR) the chain is on the cytoplasmic side.

Its subcellular location is the cell membrane. In terms of biological role, involved in regulation of archaellar gene expression. Activates flaB transcription upon nutrient starvation by acting on the flaB promoter. This Sulfolobus acidocaldarius (strain ATCC 33909 / DSM 639 / JCM 8929 / NBRC 15157 / NCIMB 11770) protein is HTH-type transcriptional activator ArnR.